The chain runs to 565 residues: Tyrosine-protein phosphatase non-receptor type 5 (565 aa).

The segment covering 1-16 has biased composition (basic and acidic residues); it reads MNYEGARSERENHAAD. The segment at 1–80 is disordered; sequence MNYEGARSER…KPPPRGAGSH (80 aa). Positions 56 to 75 are enriched in pro residues; sequence MPPPPPPSPPSDPAQKPPPR. Transmembrane regions (helical) follow at residues 88 to 108 and 146 to 166; these read LCLF…FSGY and LLLV…WHLL. The segment at 169–189 is disordered; it reads PPEPPTPLPPEDRRQSVSRQP. S245 is modified (phosphoserine; by PKA). T255 carries the post-translational modification Phosphothreonine; by MAPK. Residue S268 is modified to Phosphoserine; by MAPK. One can recognise a Tyrosine-protein phosphatase domain in the interval 300-555; that stretch reads LQAEFFEIPM…QFVHHVMSLY (256 aa). Substrate contacts are provided by residues D461, 496-502, and Q540; that span reads CSAGIGR. C496 (phosphocysteine intermediate) is an active-site residue.

It belongs to the protein-tyrosine phosphatase family. Non-receptor class subfamily. Phosphorylation at Ser-245 by PKA deactivates PTPN5. Phosphorylation at Thr-255 and Ser-268 by MAPKs stabilizes the phosphatase, dephosphorylation of these sites results in ubiquitin-mediated degradation of the active phosphatase.

It localises to the endoplasmic reticulum membrane. It carries out the reaction O-phospho-L-tyrosyl-[protein] + H2O = L-tyrosyl-[protein] + phosphate. Functionally, may regulate the activity of several effector molecules involved in synaptic plasticity and neuronal cell survival, including MAPKs, Src family kinases and NMDA receptors. The protein is Tyrosine-protein phosphatase non-receptor type 5 (PTPN5) of Homo sapiens (Human).